Reading from the N-terminus, the 98-residue chain is Small ribosomal subunit protein uS19 (98 aa).

The protein belongs to the universal ribosomal protein uS19 family.

Functionally, protein S19 forms a complex with S13 that binds strongly to the 16S ribosomal RNA. This Chlorobaculum tepidum (strain ATCC 49652 / DSM 12025 / NBRC 103806 / TLS) (Chlorobium tepidum) protein is Small ribosomal subunit protein uS19.